The chain runs to 119 residues: NADH-quinone oxidoreductase subunit A (119 aa).

A run of 3 helical transmembrane segments spans residues Phe-7–Gly-27, Leu-63–Val-83, and Ile-88–Val-108.

This sequence belongs to the complex I subunit 3 family. NDH-1 is composed of 14 different subunits. Subunits NuoA, H, J, K, L, M, N constitute the membrane sector of the complex.

Its subcellular location is the cell membrane. It catalyses the reaction a quinone + NADH + 5 H(+)(in) = a quinol + NAD(+) + 4 H(+)(out). Functionally, NDH-1 shuttles electrons from NADH, via FMN and iron-sulfur (Fe-S) centers, to quinones in the respiratory chain. The immediate electron acceptor for the enzyme in this species is believed to be ubiquinone. Couples the redox reaction to proton translocation (for every two electrons transferred, four hydrogen ions are translocated across the cytoplasmic membrane), and thus conserves the redox energy in a proton gradient. This is NADH-quinone oxidoreductase subunit A from Polynucleobacter asymbioticus (strain DSM 18221 / CIP 109841 / QLW-P1DMWA-1) (Polynucleobacter necessarius subsp. asymbioticus).